Here is a 59-residue protein sequence, read N- to C-terminus: Large ribosomal subunit protein bL32 (59 aa).

2 disordered regions span residues 1 to 23 (MAVQ…DFLT) and 35 to 59 (EVHL…TKND). Positions 49–59 (RGKKVVKTKND) are enriched in basic residues.

Belongs to the bacterial ribosomal protein bL32 family.

This Burkholderia ambifaria (strain MC40-6) protein is Large ribosomal subunit protein bL32.